A 457-amino-acid chain; its full sequence is Argininosuccinate lyase (457 aa).

The protein belongs to the lyase 1 family. Argininosuccinate lyase subfamily.

It is found in the cytoplasm. It carries out the reaction 2-(N(omega)-L-arginino)succinate = fumarate + L-arginine. Its pathway is amino-acid biosynthesis; L-arginine biosynthesis; L-arginine from L-ornithine and carbamoyl phosphate: step 3/3. The sequence is that of Argininosuccinate lyase from Haemophilus influenzae (strain 86-028NP).